An 83-amino-acid chain; its full sequence is Small ribosomal subunit protein bS16 (83 aa).

This sequence belongs to the bacterial ribosomal protein bS16 family.

This is Small ribosomal subunit protein bS16 from Chromobacterium violaceum (strain ATCC 12472 / DSM 30191 / JCM 1249 / CCUG 213 / NBRC 12614 / NCIMB 9131 / NCTC 9757 / MK).